The chain runs to 1159 residues: MVDFLAENNLCGQAILRIVSRGNAIIAELLRLSDFIPAVFRLRDKTDQQKYGDIICDFSYFKGPEYYEGKLEAKPELQDLDEEFRENNIEILTRFYLAFESVHKYVVDLIRCLDDLNEGVYIQQTLETVLLNEDGKQLLCEALYLYGVMLLVIDQKMEGEVRERMLVSYYRYSAARSSADSNLDDICKLLRSTGYSSHPGAKRPTNYPESYFQRVPISSTFISMVIGRLRSDDIYNQVSAYPLPEHRSTALATQAAMLYVCLYFTPSILHTQQAKMREIVDKYFPDNWVISIYMGITVNLVEAWEPYKAAKIALNYTLDTANIREQAGRYAASVETLRPQVQQLLKEGFLREEIILDNIPKLLNCLRDCNVAIRWLMLHTAESAYDPNNKRLRQIKDQVINDSKYNPKILFQLLLDTAQFEFILKEMFKQMLAEKQLKWESYKKEGSERMMELAEVFSGVKPLTRVEKNENLQAWFREISKQIESLNYEDSTAAGRKTVQLIQALVEVQEFHQLESNLQVCQFLADTRKFLHQMIRTINIKEEVLITMQIVGDLSYAWQIIDSFTAIMQESIRANPSMVTKLRATLLKLASALDLPLLRINQVNSPDLLSVSQFYSGELVAYVRKVLQIIPESMFTSLAKIIKLQIHDIMEVPTRLDKDKLKDYSQLSARYEVAKLTHAISVFTEGILMMKTTLVGIIQVDPKQLLEDGIRKELVKRVAYALHKGLIFNPKAKPSELMPKLKEMAATMDGFYRSFEYIQDYVSIYGLKIWQEEVSRIINYNVEQECNSFLRTKIQDWQSVHQSTHIPIPKYPSVDESATFIGRLCREILRITDPKVTCYIDQLNTWYDLRTHQEVTNNRLFSEIQDTLGTFGLNGLDRLLCFMIVKELQNFLTVLQKSILKDKAVVDVFKALLTAVNPVKGIVANASKVYTNAAAKTQKIWSPYLESIMKVGQMQILRQQIANELNYSCKFDSKHLAAALDNLNKSLLSDIEAHYQDPSLPYPKEDNTLLYEITAYLEAAGIHNPLNKIYITTKRLPYFPIVNFLFLIAQLPKLQYNKSQGMACRKPADALDWAPLVLGLLTLLKQFHSRYTEQFLALIGQFIRSIMEQCTSQKIPDMPSDVVGALMFLEDYVRYTKLPRKVAEAHVPSFIFDEFRTVL.

It belongs to the strumpellin family. As to quaternary structure, component of the WASH complex.

Its subcellular location is the early endosome. Acts at least in part as component of the WASH complex which seems to regulate washc1 nucleation-promoting factor (NPF) activity and is required for its membrane targeting during endosomal sorting. The polypeptide is WASH complex subunit 5 (Danio rerio (Zebrafish)).